A 67-amino-acid polypeptide reads, in one-letter code: Protein Tpau_2998 (67 aa).

The sequence is that of Protein Tpau_2998 from Tsukamurella paurometabola (strain ATCC 8368 / DSM 20162 / CCUG 35730 / CIP 100753 / JCM 10117 / KCTC 9821 / NBRC 16120 / NCIMB 702349 / NCTC 13040) (Corynebacterium paurometabolum).